We begin with the raw amino-acid sequence, 393 residues long: Chorismate synthase (393 aa).

NADP(+) is bound by residues R39 and R45. Residues 133 to 135, 256 to 257, G301, 316 to 320, and R342 contribute to the FMN site; these read RSS, NA, and KPIPT.

It belongs to the chorismate synthase family. As to quaternary structure, homotetramer. FMNH2 is required as a cofactor.

It carries out the reaction 5-O-(1-carboxyvinyl)-3-phosphoshikimate = chorismate + phosphate. It functions in the pathway metabolic intermediate biosynthesis; chorismate biosynthesis; chorismate from D-erythrose 4-phosphate and phosphoenolpyruvate: step 7/7. Catalyzes the anti-1,4-elimination of the C-3 phosphate and the C-6 proR hydrogen from 5-enolpyruvylshikimate-3-phosphate (EPSP) to yield chorismate, which is the branch point compound that serves as the starting substrate for the three terminal pathways of aromatic amino acid biosynthesis. This reaction introduces a second double bond into the aromatic ring system. The sequence is that of Chorismate synthase from Lysinibacillus sphaericus (strain C3-41).